The sequence spans 173 residues: uncharacterized protein (173 aa).

The interval 49 to 72 is disordered; sequence PTRSGRTSNSGNRGPVMTSTSSIN.

This is an uncharacterized protein from Human adenovirus B serotype 7 (HAdV-7).